The primary structure comprises 417 residues: 3-oxoacyl-[acyl-carrier-protein] synthase 2 (417 aa).

The Ketosynthase family 3 (KS3) domain occupies Phe-10–Arg-416. Catalysis depends on for beta-ketoacyl synthase activity residues Cys-170, His-311, and His-346.

Belongs to the thiolase-like superfamily. Beta-ketoacyl-ACP synthases family.

It localises to the cytoplasm. It catalyses the reaction an ultra-long-chain di-unsaturated fatty acyl-[ACP] + malonyl-[ACP] + H(+) = a 3-oxo-ultra-long-chain di-unsaturated fatty acyl-[ACP] + holo-[ACP] + CO2. Its pathway is lipid metabolism; mycolic acid biosynthesis. Functionally, part of the mycobacterial fatty acid elongation system FAS-II, which is involved in mycolic acid biosynthesis. Catalyzes the elongation of long chain acyl-ACP substrates by the addition of two carbons from malonyl-ACP to an acyl acceptor. Involved in extension of the mycolate chains to full lengths and produces longer chain multiunsaturated hydrocarbons averaging 54 carbons in length. The protein is 3-oxoacyl-[acyl-carrier-protein] synthase 2 (kasB) of Mycobacterium bovis (strain ATCC BAA-935 / AF2122/97).